A 590-amino-acid chain; its full sequence is Aspartate--tRNA ligase (590 aa).

An L-aspartate-binding site is contributed by E172. An aspartate region spans residues 196–199 (QLFK). Residue R218 coordinates L-aspartate. ATP is bound by residues 218–220 (RDE) and Q227. An L-aspartate-binding site is contributed by H449. E483 lines the ATP pocket. Residue R490 participates in L-aspartate binding. 535-538 (GLDR) serves as a coordination point for ATP.

It belongs to the class-II aminoacyl-tRNA synthetase family. Type 1 subfamily. As to quaternary structure, homodimer.

It is found in the cytoplasm. The catalysed reaction is tRNA(Asp) + L-aspartate + ATP = L-aspartyl-tRNA(Asp) + AMP + diphosphate. Catalyzes the attachment of L-aspartate to tRNA(Asp) in a two-step reaction: L-aspartate is first activated by ATP to form Asp-AMP and then transferred to the acceptor end of tRNA(Asp). This chain is Aspartate--tRNA ligase, found in Glaesserella parasuis serovar 5 (strain SH0165) (Haemophilus parasuis).